We begin with the raw amino-acid sequence, 525 residues long: Squalene epoxidase 3 (525 aa).

A helical transmembrane segment spans residues 9-29 (HCILTTTFVASLFAFLLLYVL). FAD is bound by residues 64–65 (VA), 84–85 (ER), arginine 92, arginine 163, valine 179, aspartate 341, and methionine 354. The next 2 membrane-spanning stretches (helical) occupy residues 452-472 (LVLH…VPLP) and 477-497 (LWLG…IIKA).

Belongs to the squalene monooxygenase family. FAD serves as cofactor. In terms of tissue distribution, expressed in seedlings, leaves, stems, inflorescences and siliques.

Its subcellular location is the membrane. The catalysed reaction is squalene + reduced [NADPH--hemoprotein reductase] + O2 = (S)-2,3-epoxysqualene + oxidized [NADPH--hemoprotein reductase] + H2O + H(+). It participates in terpene metabolism; lanosterol biosynthesis; lanosterol from farnesyl diphosphate: step 2/3. Its function is as follows. Catalyzes the stereospecific oxidation of squalene to (S)-2,3-epoxysqualene, and is considered to be a rate-limiting enzyme in steroid biosynthesis. Can produce not only oxidosqualene, but also 2,3:22,23-dioxidosqualene. This Arabidopsis thaliana (Mouse-ear cress) protein is Squalene epoxidase 3 (SQE3).